The sequence spans 471 residues: BPI fold-containing family B member 1 (471 aa).

A signal peptide spans 1–18 (MTNPWIVSLLLGATLVQA). Residues Asn150, Asn157, Asn260, and Asn397 are each glycosylated (N-linked (GlcNAc...) asparagine). A disulfide bridge connects residues Cys154 and Cys197.

Belongs to the BPI/LBP/Plunc superfamily. Plunc family.

The protein localises to the secreted. May play a role in innate immunity in mouth, nose and lungs. Binds bacterial lipopolysaccharide (LPS) and modulates the cellular responses to LPS. The chain is BPI fold-containing family B member 1 (Bpifb1) from Rattus norvegicus (Rat).